Reading from the N-terminus, the 413-residue chain is CCA-adding enzyme (413 aa).

ATP contacts are provided by serine 42 and lysine 45. The CTP site is built by serine 42 and lysine 45. Mg(2+) is bound by residues aspartate 54, aspartate 56, and aspartate 107. ATP contacts are provided by histidine 130, lysine 150, and tyrosine 159. 3 residues coordinate CTP: histidine 130, lysine 150, and tyrosine 159.

This sequence belongs to the tRNA nucleotidyltransferase/poly(A) polymerase family. Archaeal CCA-adding enzyme subfamily. As to quaternary structure, homodimer. Requires Mg(2+) as cofactor.

The enzyme catalyses a tRNA precursor + 2 CTP + ATP = a tRNA with a 3' CCA end + 3 diphosphate. The catalysed reaction is a tRNA with a 3' CCA end + 2 CTP + ATP = a tRNA with a 3' CCACCA end + 3 diphosphate. Catalyzes the addition and repair of the essential 3'-terminal CCA sequence in tRNAs without using a nucleic acid template. Adds these three nucleotides in the order of C, C, and A to the tRNA nucleotide-73, using CTP and ATP as substrates and producing inorganic pyrophosphate. tRNA 3'-terminal CCA addition is required both for tRNA processing and repair. Also involved in tRNA surveillance by mediating tandem CCA addition to generate a CCACCA at the 3' terminus of unstable tRNAs. While stable tRNAs receive only 3'-terminal CCA, unstable tRNAs are marked with CCACCA and rapidly degraded. The polypeptide is CCA-adding enzyme (Sulfurisphaera tokodaii (strain DSM 16993 / JCM 10545 / NBRC 100140 / 7) (Sulfolobus tokodaii)).